Consider the following 1200-residue polypeptide: Chromosome partition protein Smc (1200 aa).

32-39 (PNGCGKSN) serves as a coordination point for ATP. Coiled-coil stretches lie at residues 171–219 (VTKY…AEKY) and 252–342 (LENL…MSEA). Residues 528–644 (QGIFGLVADV…QDVATARAWT (117 aa)) enclose the SMC hinge domain. Coiled coils occupy residues 679–706 (ALQKKREIAELATEVARVEERYNEILTR) and 735–762 (LASQEKDLHKAGEDLARVRERVRALEVE). Positions 763–795 (EGQLTQSHQALEHEEEASRGEVAHGQADREGRE) are disordered. A compositionally biased stretch (basic and acidic residues) spans 772–795 (ALEHEEEASRGEVAHGQADREGRE). Positions 1002 to 1039 (HAELSKRYDFLTAQKKDLQSSIEQLKEAIQRIDATSRE) form a coiled coil.

It belongs to the SMC family. Homodimer. Probably forms the Structural Maintenance of Chromosome (SMC) condensin-like complex with ScpA and ScpB.

It localises to the cytoplasm. In terms of biological role, a conditionally essential component of the chromosome segregation machinery. Required for chromosome condensation and partitioning. Important for positioning of ParB-parS complexes (ori of replication) and of the ter replication site, as well as for segration of the ParB-parS complex and thus chromosome segregation. May act via the formation of a condensin-like complex containing Smc, ScpA and ScpB that pulls DNA away from mid-cell into both cell halves. The chain is Chromosome partition protein Smc from Myxococcus xanthus (strain DK1622).